The sequence spans 466 residues: Alpha-1A adrenergic receptor (466 aa).

Over 1-27 (MVLLSENASEGSNCTHPPAQVNISKAI) the chain is Extracellular. N-linked (GlcNAc...) asparagine glycosylation is found at asparagine 7, asparagine 13, and asparagine 22. A helical membrane pass occupies residues 28–51 (LLGVILGGLIIFGVLGNILVILSV). The Cytoplasmic segment spans residues 52-64 (ACHRHLHSVTHYY). A helical transmembrane segment spans residues 65–88 (IVNLAVADLLLTSTVLPFSAIFEI). The Extracellular portion of the chain corresponds to 89-99 (LGYWAFGRVFC). Residues cysteine 99 and cysteine 176 are joined by a disulfide bond. Residues 100–122 (NIWAAVDVLCCTASIMGLCIISI) form a helical membrane-spanning segment. Over 123 to 143 (DRYIGVSYPLRYPTIVTQRRG) the chain is Cytoplasmic. Residues 144 to 167 (VRALLCVWALSLVISIGPLFGWRQ) form a helical membrane-spanning segment. Residues 168-181 (QAPEDETICQINEE) lie on the Extracellular side of the membrane. The chain crosses the membrane as a helical span at residues 182–205 (PGYVLFSALGSFYVPLTIILVMYC). The Cytoplasmic segment spans residues 206 to 273 (RVYVVAKRES…FSREKKAAKT (68 aa)). Serine 215 bears the Phosphoserine; by PKA mark. The helical transmembrane segment at 274-297 (LGIVVGCFVLCWLPFFLVMPIGSF) threads the bilayer. Residues 298 to 305 (FPNFKPPE) lie on the Extracellular side of the membrane. Residues 306–329 (TVFKIVFWLGYLNSCINPIIYPCS) form a helical membrane-spanning segment. At 330 to 466 (SQEFKKAFQN…ISLGENGEEV (137 aa)) the chain is on the cytoplasmic side. The Nuclear localization signal signature appears at 334–349 (KKAFQNVLRIQCLRRR). The S-palmitoyl cysteine moiety is linked to residue cysteine 345.

The protein belongs to the G-protein coupled receptor 1 family. Adrenergic receptor subfamily. ADRA1A sub-subfamily. Homo- and heterooligomer. Heterooligomerizes with ADRA1B homooligomers in cardiac myocytes. Interacts with CAVIN4.

The protein localises to the nucleus membrane. It localises to the cell membrane. The protein resides in the cytoplasm. It is found in the membrane. Its subcellular location is the caveola. Its function is as follows. This alpha-adrenergic receptor mediates its action by association with G proteins that activate a phosphatidylinositol-calcium second messenger system. Its effect is mediated by G(q) and G(11) proteins. Nuclear ADRA1A-ADRA1B heterooligomers regulate phenylephrine (PE)-stimulated ERK signaling in cardiac myocytes. This Mus musculus (Mouse) protein is Alpha-1A adrenergic receptor (Adra1a).